The sequence spans 226 residues: GTP-binding nuclear protein Ran (226 aa).

The region spanning 3 to 184 (DPISFKVILV…LSILRTLLND (182 aa)) is the Small GTPase Ran-type domain. Position 14-21 (14-21 (DGATGKTT)) interacts with GTP. Residues 33–41 (KQYISTIGV) are switch-I. GTP is bound by residues Gly70, 135–138 (NKCD), and 163–165 (SAK). Residues 70–86 (GQEKFGGLRDGYYVDSD) form a switch-II region.

The protein belongs to the small GTPase superfamily. Ran family. As to quaternary structure, found in a nuclear export complex with RanGTP, exportin and pre-miRNA.

It localises to the nucleus. In terms of biological role, GTP-binding protein involved in nucleocytoplasmic transport. Required for the import of protein into the nucleus and also for RNA export. Involved in chromatin condensation and control of cell cycle. The chain is GTP-binding nuclear protein Ran from Giardia intestinalis (Giardia lamblia).